The following is a 279-amino-acid chain: Ribonuclease Z (279 aa).

Residues H64, H66, D68, H69, H134, D191, and H245 each contribute to the Zn(2+) site. D68 functions as the Proton acceptor in the catalytic mechanism.

The protein belongs to the RNase Z family. As to quaternary structure, homodimer. It depends on Zn(2+) as a cofactor.

The enzyme catalyses Endonucleolytic cleavage of RNA, removing extra 3' nucleotides from tRNA precursor, generating 3' termini of tRNAs. A 3'-hydroxy group is left at the tRNA terminus and a 5'-phosphoryl group is left at the trailer molecule.. Its function is as follows. Zinc phosphodiesterase, which displays some tRNA 3'-processing endonuclease activity. Probably involved in tRNA maturation, by removing a 3'-trailer from precursor tRNA. This Methanopyrus kandleri (strain AV19 / DSM 6324 / JCM 9639 / NBRC 100938) protein is Ribonuclease Z.